We begin with the raw amino-acid sequence, 543 residues long: CTP synthase (543 aa).

The interval 1-266 (MKTNYIFVTG…DDYICERFSL (266 aa)) is amidoligase domain. Residue Ser-14 coordinates CTP. A UTP-binding site is contributed by Ser-14. ATP contacts are provided by residues 15-20 (SLGKGI) and Asp-72. Asp-72 and Glu-140 together coordinate Mg(2+). CTP contacts are provided by residues 147–149 (DIE), 187–192 (KTKPTQ), and Lys-223. Residues 187 to 192 (KTKPTQ) and Lys-223 each bind UTP. 239-241 (KDV) is a binding site for ATP. One can recognise a Glutamine amidotransferase type-1 domain in the interval 291–538 (TVGIVGKYID…IKAASEYQKK (248 aa)). Gly-352 provides a ligand contact to L-glutamine. Cys-379 serves as the catalytic Nucleophile; for glutamine hydrolysis. Residues 380 to 383 (LGMQ), Glu-403, and Arg-466 contribute to the L-glutamine site. Residues His-511 and Glu-513 contribute to the active site.

The protein belongs to the CTP synthase family. As to quaternary structure, homotetramer.

It catalyses the reaction UTP + L-glutamine + ATP + H2O = CTP + L-glutamate + ADP + phosphate + 2 H(+). It carries out the reaction L-glutamine + H2O = L-glutamate + NH4(+). The enzyme catalyses UTP + NH4(+) + ATP = CTP + ADP + phosphate + 2 H(+). It participates in pyrimidine metabolism; CTP biosynthesis via de novo pathway; CTP from UDP: step 2/2. Its activity is regulated as follows. Allosterically activated by GTP, when glutamine is the substrate; GTP has no effect on the reaction when ammonia is the substrate. The allosteric effector GTP functions by stabilizing the protein conformation that binds the tetrahedral intermediate(s) formed during glutamine hydrolysis. Inhibited by the product CTP, via allosteric rather than competitive inhibition. In terms of biological role, catalyzes the ATP-dependent amination of UTP to CTP with either L-glutamine or ammonia as the source of nitrogen. Regulates intracellular CTP levels through interactions with the four ribonucleotide triphosphates. The sequence is that of CTP synthase from Baumannia cicadellinicola subsp. Homalodisca coagulata.